The following is a 644-amino-acid chain: Macrolide export ATP-binding/permease protein MacB (644 aa).

The 239-residue stretch at 7-245 folds into the ABC transporter domain; that stretch reads IELQDITRSF…IPETDQNGRR (239 aa). 43–50 is a binding site for ATP; sequence GPSGSGKS. 4 consecutive transmembrane segments (helical) span residues 271–291, 526–546, 570–590, and 607–627; these read ALTL…LAIG, IAAI…LVSV, FLTE…VIGI, and LLPM…FGFL.

The protein belongs to the ABC transporter superfamily. Macrolide exporter (TC 3.A.1.122) family. Homodimer. Part of the tripartite efflux system MacAB-TolC, which is composed of an inner membrane transporter, MacB, a periplasmic membrane fusion protein, MacA, and an outer membrane component, TolC. The complex forms a large protein conduit and can translocate molecules across both the inner and outer membranes. Interacts with MacA.

It is found in the cell inner membrane. Part of the tripartite efflux system MacAB-TolC. MacB is a non-canonical ABC transporter that contains transmembrane domains (TMD), which form a pore in the inner membrane, and an ATP-binding domain (NBD), which is responsible for energy generation. Confers resistance against macrolides. This Marinobacter nauticus (strain ATCC 700491 / DSM 11845 / VT8) (Marinobacter aquaeolei) protein is Macrolide export ATP-binding/permease protein MacB.